The following is a 925-amino-acid chain: MAPPALRPENAIRRADELVSVGEPMAALQSLFDLLSSRRSRFADAATLEPIIFKFLELGVELRKGKMIKEGLYQYKKHMQHTPEGLISVGAVARKFIDLIETKMTNIQAQTDAKEESNKDQAEEDLEGGVTPENLLVSVYEQEQTVGGFNNDDVSAWLRFTWESYRTTLDFLRNNSQLEITYAGVVNRTMQFCYKYNRKNEFKRLAEMLRQHLDAANYQQQRYGHHTVDLSDPDTLQRYSDQRFQQVNVSVKLELWHEAFRSIEDVHHLMRLSKRAPKPSVLANYYENLAKIFFVSGNYLLHAAAWEKFYNLYLKNPNASEEDFKFYSSQFVLSALAIQLDDLPIAGFDPQIRLCDLLDLESKPKRKDLITAAGEQQVVEKADADILKFFNILETNFDVKSAKSQLSALLPNLVEKPYFAQYVAPLRNLFIRRSIIEVSKAQTSIHLVELHEMLSLPAPFELSVFELEKYLIQAAMDDYVSISIDHETDTVSFAQDPFDAWQASLVEVPESSTSDEAKNSESEEETSQETHADEEQNEQVFTRNSEVRSKLTDLSKILKANEEYENGSYYYRVKLVREELIRRKEEVIKLEKEAAEIRAKSNAERKKRSEEENKILAKKALEERQRRMAEEKAAVESSMEKEAERRAEEMMEREREAIHEQEMKKLIAETNANGVIHIDPKEAKNLTSDKINQMVIEQVAKNKKDLTERMTYAFKKLDHLERAYRQMELPLLEKDAEEQKKRDRENYDNFKKKLIETSKADYEKKLALHQRLNKIYSTFNQYKSSVIAEKKEELEKQRALKEAQLEEAKKQRIEQVRKERYEAKVAEIQAAIEAEAAEKEALAKEEELAKRRAERERINKERDEIARKQREIEELLEKKNGSSRSSPVPSTPTPAPAPAQTAPVSNKPMSMAEKLRLKRMNAGRG.

The tract at residues 108–127 (QAQTDAKEESNKDQAEEDLE) is disordered. Basic and acidic residues predominate over residues 112–121 (DAKEESNKDQ). The 175-residue stretch at 324 to 498 (FKFYSSQFVL…DTVSFAQDPF (175 aa)) folds into the PCI domain. Disordered regions lie at residues 509 to 544 (PESSTSDEAKNSESEEETSQETHADEEQNEQVFTRN) and 839 to 925 (KEAL…AGRG). Coiled-coil stretches lie at residues 534–666 (EEQN…MKKL) and 785–885 (SVIA…SSRS). The segment covering 839-880 (KEALAKEEELAKRRAERERINKERDEIARKQREIEELLEKKN) has biased composition (basic and acidic residues). The span at 916–925 (RLKRMNAGRG) shows a compositional bias: basic residues.

Belongs to the eIF-3 subunit A family. In terms of assembly, component of the eukaryotic translation initiation factor 3 (eIF-3) complex.

The protein resides in the cytoplasm. In terms of biological role, RNA-binding component of the eukaryotic translation initiation factor 3 (eIF-3) complex, which is involved in protein synthesis of a specialized repertoire of mRNAs and, together with other initiation factors, stimulates binding of mRNA and methionyl-tRNAi to the 40S ribosome. The eIF-3 complex specifically targets and initiates translation of a subset of mRNAs involved in cell proliferation. This is Eukaryotic translation initiation factor 3 subunit A from Kluyveromyces lactis (strain ATCC 8585 / CBS 2359 / DSM 70799 / NBRC 1267 / NRRL Y-1140 / WM37) (Yeast).